The chain runs to 969 residues: Lateral signaling target protein 2 homolog (969 aa).

Lys-87 is covalently cross-linked (Glycyl lysine isopeptide (Lys-Gly) (interchain with G-Cter in ubiquitin)). Disordered stretches follow at residues 290–323 (QDGE…GVEE), 336–360 (SVWK…EEPI), 390–437 (STLL…YHDD), and 715–777 (RSEC…DMSE). Positions 295–310 (PTSSTNDPSASTGPDS) are enriched in polar residues. Residues 336-346 (SVWKEEEEKQV) show a composition bias toward basic and acidic residues. Over residues 391 to 402 (TLLSPPSQNQSP) the composition is skewed to polar residues. The span at 411-423 (GSSLEGSSATSST) shows a compositional bias: low complexity. Residues 715-729 (RSECFGKQSKDDNRK) show a composition bias toward basic and acidic residues. Composition is skewed to low complexity over residues 732 to 745 (SSSQ…VPSS) and 756 to 769 (SLSS…VSSL). The FYVE-type zinc finger occupies 899-959 (DEACNSCIAC…VCTHCYMFHV (61 aa)). Residues Cys-905, Cys-908, Cys-921, Cys-924, Cys-929, Cys-932, Cys-951, and Cys-954 each contribute to the Zn(2+) site.

The protein belongs to the lst-2 family. In terms of processing, monoubiquitination at Lys-87 prevents binding to phosphatidylinositol 3-phosphate (PI3P) and localization to early endosome membranes.

It localises to the cytoplasm. The protein resides in the cytosol. It is found in the early endosome membrane. Negative regulator of epidermal growth factor receptor (EGFR) signaling. Acts by promoting EGFR degradation in endosomes when not monoubiquitinated. The protein is Lateral signaling target protein 2 homolog (zfyve28) of Danio rerio (Zebrafish).